Consider the following 364-residue polypeptide: Trans-enoyl reductase ccsC (364 aa).

52-55 lines the NADP(+) pocket; it reads CDYK. Residue 141–148 coordinates substrate; sequence TGLATLGM. Residues 176–179, 199–202, tyrosine 217, and 264–265 contribute to the NADP(+) site; these read SSSV, SPRN, and LE. 284 to 288 contributes to the substrate binding site; the sequence is GPALL. Position 353–354 (353–354) interacts with NADP(+); that stretch reads VS.

It belongs to the zinc-containing alcohol dehydrogenase family. In terms of assembly, monomer.

It participates in mycotoxin biosynthesis. In terms of biological role, trans-enoyl reductase; part of the gene cluster that mediates the biosynthesis of a family of the mycotoxins cytochalasins E and K. The hybrid PKS-NRPS synthetase ccsA and the enoyl reductase ccsC are responsible for fusion of phenylalanine with an octaketide backbone and subsequent release of the stable tetramic acid precursor. The polyketide synthase module (PKS) of the PKS-NRPS ccsA is responsible for the synthesis of the octaketide backbone. The downstream nonribosomal peptide synthetase (NRPS) amidates the carboxyl end of the octaketide with a phenylalanine. A reductase-like domain (R) at the C-terminus catalyzes the reductive release of the polyketide-amino acid intermediate. Because ccsA lacks a designated enoylreductase (ER) domain, the required activity is provided the enoyl reductase ccsC. Upon formation of the 11-membered carbocycle-fused perhydroisoindolone intermediate, a number of oxidative steps are required to afford the final cytochalasin E and K, including two hydroxylations at C17 and C18, one alcohol oxidation at C17, one epoxidation at C6 and C7 and two Baeyer-Villiger oxidations. The oxidative modification at C17, C18 and the C6-C7 epoxidation are likely to be catalyzed by the two cytochrome P450 oxygenases ccsD and ccsG. CcsD may be responsible for the epoxidation of the C6-C7 double bond. CcsG may be responsible for the successive oxidative modifications at C17 and C18. The double Baeyer-Villiger oxidations of ketocytochalasin to precytochalasin and cytochalasin Z(16) are among the final steps leading to cytochalasin E and K and are catalyzed by ccsB. The first oxygen insertion step follows that of the classic BVMO mechanism, generating the ester precytochalasin. Release of precytochalasin into an aqueous environment can generate the shunt product iso-precytochalasin through spontaneous isomerization. Alternatively, precytochalasin can undergo further oxidation by ccsB to yield the in-line carbonate-containing cytochalasin Z(16). Cytochalasin Z(16) is a precursor to cytochalasin E and cytochalasin K, whereas iso-precytochalasin is a precursor to cytochalasin Z(17) and rosellichalasin. The hydrolyase ccsE may catalyze hydrolysis of epoxide bond in cytochalasin E to afford cytochalasin K. The function of ccsF has not been assigned but it may play a role in post-PKS-NRPS biosynthetic step, resistance or transport of cytochalasins and related PKS-NRPS products. In Aspergillus clavatus (strain ATCC 1007 / CBS 513.65 / DSM 816 / NCTC 3887 / NRRL 1 / QM 1276 / 107), this protein is Trans-enoyl reductase ccsC.